The chain runs to 107 residues: uncharacterized protein (107 aa).

In terms of domain architecture, HTH cro/C1-type spans 13 to 68 (LQEEFLEPLSLKISDLAQILDVHRNTASNIVNNSSRITLEMAVKLAKVFDTTPEFW). Positions 24-43 (KISDLAQILDVHRNTASNIV) form a DNA-binding region, H-T-H motif.

This sequence belongs to the VapA/VapI family.

This is an uncharacterized protein from Haemophilus influenzae (strain ATCC 51907 / DSM 11121 / KW20 / Rd).